We begin with the raw amino-acid sequence, 368 residues long: MELAMGKVNEVLFMNRGEGESSYAQNSSFTQQVASMARPALENAVKTLFSKDFHLQALNAADLGCAAGPNTFAVISTTKRMMEKKCRELNCQTLELQVYLNDLFGNDFNTLFKGLSSEVVGNKCEEVPCYVMGVPGSFHGRLFPRSSLHLVHSSYSVHWLTQAPKGLTSREGLALNKGKIYISKTSPPVVREAYLSQFHEDFTMFLNARSQEVVPNGCMVLILRGRKASDPSDMESCFTWELLAIAIAELVSQGLIDEDKLDTFNIPCYFPSLEEVKDIVERDGSFTIDHMEGFELDSLQMQENDKWVRGENFTKVVRAFTEPIISNQFGHEIMGKLYDKFTHIVVSDLEAKLPKTTSIILVLSKIDG.

Y23 lines the S-adenosyl-L-homocysteine pocket. T30 contacts caffeine. S-adenosyl-L-homocysteine contacts are provided by C65, N70, D102, L103, S137, and F138. Caffeine-binding residues include Y155, H158, and W159. Residue N176 participates in Mg(2+) binding. R224 is a binding site for caffeine. D262, F264, and N265 together coordinate Mg(2+). Residue F320 participates in caffeine binding.

The protein belongs to the methyltransferase superfamily. Type-7 methyltransferase family. Mg(2+) is required as a cofactor.

It catalyses the reaction theobromine + S-adenosyl-L-methionine = caffeine + S-adenosyl-L-homocysteine + H(+). The enzyme catalyses 7-methylxanthine + S-adenosyl-L-methionine = theobromine + S-adenosyl-L-homocysteine + H(+). It functions in the pathway alkaloid biosynthesis. In terms of biological role, involved in the biosynthesis of caffeine. Catalyzes the conversion of 7-methylxanthine (7mX) to theobromine and of theobromine to caffeine. This Camellia sinensis (Tea plant) protein is Caffeine synthase 3.